Here is a 276-residue protein sequence, read N- to C-terminus: Halorhodopsin (276 aa).

The propeptide occupies methionine 1–glutamine 21. Residues glutamate 22–serine 25 are Extracellular-facing. Residues asparagine 26–glycine 51 form a helical membrane-spanning segment. Over arginine 52 to proline 57 the chain is Cytoplasmic. A helical transmembrane segment spans residues arginine 58 to alanine 81. The Extracellular portion of the chain corresponds to serine 82–proline 105. A helical membrane pass occupies residues tryptophan 106–alanine 127. At aspartate 128 to aspartate 130 the chain is on the cytoplasmic side. Residues isoleucine 131 to isoleucine 154 traverse the membrane as a helical segment. The Extracellular portion of the chain corresponds to threonine 155–serine 157. Residues histidine 158–leucine 180 form a helical membrane-spanning segment. Residues valine 181 to threonine 192 are Cytoplasmic-facing. The helical transmembrane segment at serine 193–leucine 216 threads the bilayer. Over glycine 217–serine 225 the chain is Extracellular. The chain crosses the membrane as a helical span at residues valine 226–alanine 254. Residue lysine 241 is modified to N6-(retinylidene)lysine. Topologically, residues asparagine 255 to aspartate 276 are cytoplasmic.

The protein belongs to the archaeal/bacterial/fungal opsin family.

Its subcellular location is the cell membrane. Its function is as follows. Light-driven chloride pump. The chain is Halorhodopsin (hop) from Halobacterium halobium (strain port).